We begin with the raw amino-acid sequence, 380 residues long: 4-hydroxy-3-methylbut-2-en-1-yl diphosphate synthase (flavodoxin) (380 aa).

[4Fe-4S] cluster is bound by residues cysteine 275, cysteine 278, cysteine 310, and glutamate 317.

This sequence belongs to the IspG family. [4Fe-4S] cluster is required as a cofactor.

The enzyme catalyses (2E)-4-hydroxy-3-methylbut-2-enyl diphosphate + oxidized [flavodoxin] + H2O + 2 H(+) = 2-C-methyl-D-erythritol 2,4-cyclic diphosphate + reduced [flavodoxin]. It participates in isoprenoid biosynthesis; isopentenyl diphosphate biosynthesis via DXP pathway; isopentenyl diphosphate from 1-deoxy-D-xylulose 5-phosphate: step 5/6. Its function is as follows. Converts 2C-methyl-D-erythritol 2,4-cyclodiphosphate (ME-2,4cPP) into 1-hydroxy-2-methyl-2-(E)-butenyl 4-diphosphate. This chain is 4-hydroxy-3-methylbut-2-en-1-yl diphosphate synthase (flavodoxin), found in Hyphomonas neptunium (strain ATCC 15444).